Here is a 103-residue protein sequence, read N- to C-terminus: Signal recognition particle 19 kDa protein (103 aa).

This sequence belongs to the SRP19 family. Part of the signal recognition particle protein translocation system, which is composed of SRP and FtsY. Archaeal SRP consists of a 7S RNA molecule of 300 nucleotides and two protein subunits: SRP54 and SRP19.

It localises to the cytoplasm. Involved in targeting and insertion of nascent membrane proteins into the cytoplasmic membrane. Binds directly to 7S RNA and mediates binding of the 54 kDa subunit of the SRP. The polypeptide is Signal recognition particle 19 kDa protein (Hyperthermus butylicus (strain DSM 5456 / JCM 9403 / PLM1-5)).